A 181-amino-acid chain; its full sequence is Large ribosomal subunit protein uL6 (181 aa).

This sequence belongs to the universal ribosomal protein uL6 family. In terms of assembly, part of the 50S ribosomal subunit.

Its function is as follows. This protein binds to the 23S rRNA, and is important in its secondary structure. It is located near the subunit interface in the base of the L7/L12 stalk, and near the tRNA binding site of the peptidyltransferase center. The protein is Large ribosomal subunit protein uL6 of Lawsonia intracellularis (strain PHE/MN1-00).